The following is a 184-amino-acid chain: Protein GrpE (184 aa).

This sequence belongs to the GrpE family. Homodimer.

It is found in the cytoplasm. Functionally, participates actively in the response to hyperosmotic and heat shock by preventing the aggregation of stress-denatured proteins, in association with DnaK and GrpE. It is the nucleotide exchange factor for DnaK and may function as a thermosensor. Unfolded proteins bind initially to DnaJ; upon interaction with the DnaJ-bound protein, DnaK hydrolyzes its bound ATP, resulting in the formation of a stable complex. GrpE releases ADP from DnaK; ATP binding to DnaK triggers the release of the substrate protein, thus completing the reaction cycle. Several rounds of ATP-dependent interactions between DnaJ, DnaK and GrpE are required for fully efficient folding. This is Protein GrpE from Pseudomonas putida (strain GB-1).